Here is a 635-residue protein sequence, read N- to C-terminus: Threonine--tRNA ligase (635 aa).

A TGS domain is found at 1 to 61 (MIQITLPDNS…DHDARLQIIT (61 aa)). Residues 242-533 (DHRKLGKELD…LIEHHAGALP (292 aa)) are catalytic. 3 residues coordinate Zn(2+): cysteine 333, histidine 384, and histidine 510.

Belongs to the class-II aminoacyl-tRNA synthetase family. In terms of assembly, homodimer. Zn(2+) serves as cofactor.

The protein resides in the cytoplasm. It catalyses the reaction tRNA(Thr) + L-threonine + ATP = L-threonyl-tRNA(Thr) + AMP + diphosphate + H(+). Functionally, catalyzes the attachment of threonine to tRNA(Thr) in a two-step reaction: L-threonine is first activated by ATP to form Thr-AMP and then transferred to the acceptor end of tRNA(Thr). Also edits incorrectly charged L-seryl-tRNA(Thr). The protein is Threonine--tRNA ligase of Variovorax paradoxus (strain S110).